A 106-amino-acid chain; its full sequence is MVRILRWFIRLYQIAISPLLGPRCRYIPTCSQYALEALQTHGAIKGVWLSSKRICRCHPWGGSGYDPVPPKAIRFISFHQIDSQTHHVAVPFRDRLMKQNLSNHLG.

This sequence belongs to the UPF0161 family.

Its subcellular location is the cell inner membrane. Could be involved in insertion of integral membrane proteins into the membrane. The chain is Putative membrane protein insertion efficiency factor from Acinetobacter baumannii (strain AB307-0294).